Here is a 159-residue protein sequence, read N- to C-terminus: NADH-quinone oxidoreductase subunit B (159 aa).

4 residues coordinate [4Fe-4S] cluster: C37, C38, C102, and C132.

Belongs to the complex I 20 kDa subunit family. NDH-1 is composed of 14 different subunits. Subunits NuoB, C, D, E, F, and G constitute the peripheral sector of the complex. [4Fe-4S] cluster serves as cofactor.

It localises to the cell inner membrane. The catalysed reaction is a quinone + NADH + 5 H(+)(in) = a quinol + NAD(+) + 4 H(+)(out). Its function is as follows. NDH-1 shuttles electrons from NADH, via FMN and iron-sulfur (Fe-S) centers, to quinones in the respiratory chain. Couples the redox reaction to proton translocation (for every two electrons transferred, four hydrogen ions are translocated across the cytoplasmic membrane), and thus conserves the redox energy in a proton gradient. This Paraburkholderia phymatum (strain DSM 17167 / CIP 108236 / LMG 21445 / STM815) (Burkholderia phymatum) protein is NADH-quinone oxidoreductase subunit B.